We begin with the raw amino-acid sequence, 365 residues long: 3-dehydroquinate synthase (365 aa).

Residues 106 to 110, 130 to 131, Lys142, Lys151, and 169 to 172 each bind NAD(+); these read GVIGD, TT, and FFAT. Residues Glu184, His247, and His264 each contribute to the Zn(2+) site.

Belongs to the sugar phosphate cyclases superfamily. Dehydroquinate synthase family. It depends on NAD(+) as a cofactor. Co(2+) is required as a cofactor. Requires Zn(2+) as cofactor.

Its subcellular location is the cytoplasm. The enzyme catalyses 7-phospho-2-dehydro-3-deoxy-D-arabino-heptonate = 3-dehydroquinate + phosphate. Its pathway is metabolic intermediate biosynthesis; chorismate biosynthesis; chorismate from D-erythrose 4-phosphate and phosphoenolpyruvate: step 2/7. In terms of biological role, catalyzes the conversion of 3-deoxy-D-arabino-heptulosonate 7-phosphate (DAHP) to dehydroquinate (DHQ). This chain is 3-dehydroquinate synthase, found in Listeria monocytogenes serovar 1/2a (strain ATCC BAA-679 / EGD-e).